Consider the following 692-residue polypeptide: Transcription factor steA (692 aa).

A DNA-binding region spans residues 56–165 (DQLIRRFLLP…SVPHDRLFLD (110 aa)). 2 disordered regions span residues 406 to 507 (SPTY…EQSS) and 519 to 540 (LPAN…SDRY). Polar residues predominate over residues 470–482 (RSVNSTYTATLPQ). C2H2-type zinc fingers lie at residues 564–588 (HSCP…VRTH) and 594–616 (YPCP…RRIH). Positions 618–665 (AQQDGQPLVHEDDLENDDNESVSHDEDESPSESVHPAVPGVHGMTSMP) are disordered. A compositionally biased stretch (acidic residues) spans 629 to 647 (DDLENDDNESVSHDEDESP).

This sequence belongs to the STE12 transcription factor family.

The protein resides in the nucleus. Functionally, transcription factor involved in sexual reproduction. Required for cleistothecial development and ascosporogenesis. Not required for asexual reproduction (conidiation). May act to repress medA expression. In Emericella nidulans (strain FGSC A4 / ATCC 38163 / CBS 112.46 / NRRL 194 / M139) (Aspergillus nidulans), this protein is Transcription factor steA (steA).